Consider the following 258-residue polypeptide: Triosephosphate isomerase (258 aa).

9–11 (NWK) serves as a coordination point for substrate. His105 serves as the catalytic Electrophile. Glu176 functions as the Proton acceptor in the catalytic mechanism. The substrate site is built by Gly182 and Ser214.

The protein belongs to the triosephosphate isomerase family. As to quaternary structure, homodimer.

It localises to the cytoplasm. The catalysed reaction is D-glyceraldehyde 3-phosphate = dihydroxyacetone phosphate. Its pathway is carbohydrate biosynthesis; gluconeogenesis. It participates in carbohydrate degradation; glycolysis; D-glyceraldehyde 3-phosphate from glycerone phosphate: step 1/1. Its function is as follows. Involved in the gluconeogenesis. Catalyzes stereospecifically the conversion of dihydroxyacetone phosphate (DHAP) to D-glyceraldehyde-3-phosphate (G3P). The sequence is that of Triosephosphate isomerase from Mycoplasmopsis agalactiae (strain NCTC 10123 / CIP 59.7 / PG2) (Mycoplasma agalactiae).